The following is a 91-amino-acid chain: Tachykinin-like peptide (91 aa).

The first 19 residues, 1–19 (MKILVAFAVIMLVSAQVLA), serve as a signal peptide directing secretion. A propeptide spanning residues 20 to 51 (AEIGLNDEPEWYSDQIQEDLPVFENFLQRIAR) is cleaved from the precursor. Methionine amide is present on Met62. Positions 64–91 (KRNNGFGQMSRKRSAERNTIHNYERRRK) are disordered. Positions 66-91 (NNGFGQMSRKRSAERNTIHNYERRRK) are excised as a propeptide. Positions 76–91 (RSAERNTIHNYERRRK) are enriched in basic and acidic residues.

Expressed by the skin glands.

The protein localises to the secreted. Functionally, tachykinins are active peptides which excite neurons, evoke behavioral responses, are potent vasodilators and secretagogues, and contract (directly or indirectly) many smooth muscles. In vitro, induces contraction of guinea pig ileum smooth muscle in a dose-dependent manner. The protein is Tachykinin-like peptide of Theloderma corticale (Kwangsi warty tree frog).